The following is a 396-amino-acid chain: uncharacterized protein (396 aa).

A run of 12 helical transmembrane segments spans residues 12-32 (LLAL…SVGL), 48-68 (GLTV…LTSL), 78-98 (LLWI…ASSI), 106-126 (VISA…AADI), 138-158 (IMFT…TFIG), 165-185 (FAFM…GILV), 209-229 (LLLL…VFTY), 242-262 (AGTV…GNMI), 271-291 (PIAA…VLTF), 297-317 (AAGL…VPGL), 338-358 (AMNI…GGVI), and 362-382 (IGLI…VILT).

This sequence belongs to the major facilitator superfamily.

Its subcellular location is the cell membrane. This is an uncharacterized protein from Bacillus subtilis (strain 168).